A 446-amino-acid chain; its full sequence is Divalent metal cation transporter MntH (446 aa).

The next 11 helical transmembrane spans lie at 32-52 (FSFLGPGLLVAVGYMDPGNWI), 59-79 (AQFGYILLFVILLSSLSAMLL), 107-127 (AFVFWIIAELAIIATDIAEVI), 139-159 (IPLLVGALITVFDVFLLLFIM), 168-188 (AIVGTLIFTVLVIFVFEVFIA), 210-230 (GALFIALGIIGATIMPHNLYL), 264-284 (SIAFIVNCLLLVLGAALFFGV), 303-323 (PLLGASLGAIMSTLFAIALLA), 355-375 (LITRLIAILPIIICLIVFNSN), 381-401 (QLLVFSQVFLSLALPFSLIPL), and 420-440 (VNIISWCLIIILSILNIYLII).

It belongs to the NRAMP family.

It is found in the cell membrane. H(+)-stimulated, divalent metal cation uptake system. This Staphylococcus saprophyticus subsp. saprophyticus (strain ATCC 15305 / DSM 20229 / NCIMB 8711 / NCTC 7292 / S-41) protein is Divalent metal cation transporter MntH.